Reading from the N-terminus, the 464-residue chain is Glutamate--tRNA ligase (464 aa).

The short motif at 9–19 (PSPTGYLHIGG) is the 'HIGH' region element. A 'KMSKS' region motif is present at residues 242 to 246 (KISKR). Lys-245 serves as a coordination point for ATP.

Belongs to the class-I aminoacyl-tRNA synthetase family. Glutamate--tRNA ligase type 1 subfamily. Monomer.

It is found in the cytoplasm. It carries out the reaction tRNA(Glu) + L-glutamate + ATP = L-glutamyl-tRNA(Glu) + AMP + diphosphate. Catalyzes the attachment of glutamate to tRNA(Glu) in a two-step reaction: glutamate is first activated by ATP to form Glu-AMP and then transferred to the acceptor end of tRNA(Glu). The protein is Glutamate--tRNA ligase of Neisseria meningitidis serogroup B (strain ATCC BAA-335 / MC58).